The chain runs to 253 residues: Probable transcriptional regulatory protein A1G_04400 (253 aa).

A disordered region spans residues 1 to 21; the sequence is MAGHSKFKNIQHRKGAQDKKR.

Belongs to the TACO1 family.

It is found in the cytoplasm. The sequence is that of Probable transcriptional regulatory protein A1G_04400 from Rickettsia rickettsii (strain Sheila Smith).